The primary structure comprises 314 residues: Ribosomal protein L11 methyltransferase (314 aa).

S-adenosyl-L-methionine-binding residues include Thr166, Gly187, Asp209, and Asn251.

The protein belongs to the methyltransferase superfamily. PrmA family.

Its subcellular location is the cytoplasm. It carries out the reaction L-lysyl-[protein] + 3 S-adenosyl-L-methionine = N(6),N(6),N(6)-trimethyl-L-lysyl-[protein] + 3 S-adenosyl-L-homocysteine + 3 H(+). Functionally, methylates ribosomal protein L11. The protein is Ribosomal protein L11 methyltransferase of Clostridium tetani (strain Massachusetts / E88).